Reading from the N-terminus, the 345-residue chain is Glycosyltransferase 1 domain-containing protein 1 (345 aa).

The signal sequence occupies residues 1-19 (MKILFLACLRAHTGNSTTA). 2 N-linked (GlcNAc...) asparagine glycosylation sites follow: N246 and N322.

This sequence belongs to the glycosyltransferase group 1 family. Glycosyltransferase 4 subfamily.

It is found in the secreted. The protein is Glycosyltransferase 1 domain-containing protein 1 (glt1d1) of Xenopus tropicalis (Western clawed frog).